The sequence spans 201 residues: Adenylyl-sulfate kinase (201 aa).

35–42 (GLSGSGKS) contacts ATP. Serine 109 (phosphoserine intermediate) is an active-site residue.

It belongs to the APS kinase family.

The enzyme catalyses adenosine 5'-phosphosulfate + ATP = 3'-phosphoadenylyl sulfate + ADP + H(+). The protein operates within sulfur metabolism; hydrogen sulfide biosynthesis; sulfite from sulfate: step 2/3. Functionally, catalyzes the synthesis of activated sulfate. This is Adenylyl-sulfate kinase from Bacteroides thetaiotaomicron (strain ATCC 29148 / DSM 2079 / JCM 5827 / CCUG 10774 / NCTC 10582 / VPI-5482 / E50).